Reading from the N-terminus, the 386-residue chain is Arginine biosynthesis bifunctional protein ArgJ (386 aa).

Thr148, Lys170, Thr181, Glu261, Asn381, and Ser386 together coordinate substrate. The Nucleophile role is filled by Thr181.

It belongs to the ArgJ family. As to quaternary structure, heterotetramer of two alpha and two beta chains.

The protein resides in the cytoplasm. It carries out the reaction N(2)-acetyl-L-ornithine + L-glutamate = N-acetyl-L-glutamate + L-ornithine. The catalysed reaction is L-glutamate + acetyl-CoA = N-acetyl-L-glutamate + CoA + H(+). The protein operates within amino-acid biosynthesis; L-arginine biosynthesis; L-ornithine and N-acetyl-L-glutamate from L-glutamate and N(2)-acetyl-L-ornithine (cyclic): step 1/1. It functions in the pathway amino-acid biosynthesis; L-arginine biosynthesis; N(2)-acetyl-L-ornithine from L-glutamate: step 1/4. Catalyzes two activities which are involved in the cyclic version of arginine biosynthesis: the synthesis of N-acetylglutamate from glutamate and acetyl-CoA as the acetyl donor, and of ornithine by transacetylation between N(2)-acetylornithine and glutamate. This chain is Arginine biosynthesis bifunctional protein ArgJ, found in Corynebacterium diphtheriae (strain ATCC 700971 / NCTC 13129 / Biotype gravis).